We begin with the raw amino-acid sequence, 341 residues long: Phosphate acyltransferase (341 aa).

The protein belongs to the PlsX family. As to quaternary structure, homodimer. Probably interacts with PlsY.

It localises to the cytoplasm. The catalysed reaction is a fatty acyl-[ACP] + phosphate = an acyl phosphate + holo-[ACP]. It participates in lipid metabolism; phospholipid metabolism. In terms of biological role, catalyzes the reversible formation of acyl-phosphate (acyl-PO(4)) from acyl-[acyl-carrier-protein] (acyl-ACP). This enzyme utilizes acyl-ACP as fatty acyl donor, but not acyl-CoA. The protein is Phosphate acyltransferase of Vibrio campbellii (strain ATCC BAA-1116).